The sequence spans 226 residues: Large ribosomal subunit protein uL3 (226 aa).

This sequence belongs to the universal ribosomal protein uL3 family. As to quaternary structure, part of the 50S ribosomal subunit. Forms a cluster with proteins L14 and L19.

One of the primary rRNA binding proteins, it binds directly near the 3'-end of the 23S rRNA, where it nucleates assembly of the 50S subunit. The sequence is that of Large ribosomal subunit protein uL3 from Sulfurihydrogenibium sp. (strain YO3AOP1).